Here is a 786-residue protein sequence, read N- to C-terminus: Elastin (786 aa).

Positions methionine 1–proline 26 are cleaved as a signal peptide. Hydroxyproline is present on proline 34. A hydroxyproline; partial mark is found at proline 65, proline 67, and proline 88. Lysine 104 and lysine 107 each carry allysine. Residue proline 116 is modified to 4-hydroxyproline; partial. Hydroxyproline; partial occurs at positions 156, 167, 170, and 177. At proline 190 the chain carries 4-hydroxyproline; partial. An allysine mark is found at lysine 241, lysine 261, and lysine 265. Residues proline 283 and proline 286 each carry the 4-hydroxyproline; partial modification. Proline 290 carries the hydroxyproline; partial modification. Residues lysine 312 and lysine 315 each carry the allysine modification. 4-hydroxyproline; partial occurs at positions 327, 342, and 347. A hydroxyproline; partial mark is found at proline 352 and proline 355. Residue proline 360 is modified to 4-hydroxyproline; partial. An allysine mark is found at lysine 375, lysine 379, and lysine 382. Residue proline 415 is modified to 4-hydroxyproline; partial. The residue at position 421 (proline 421) is a Hydroxyproline; partial. Proline 427 is modified (4-hydroxyproline; partial). 2 positions are modified to allysine: lysine 448 and lysine 451. Hydroxyproline; partial is present on proline 465. A 4-hydroxyproline; partial modification is found at proline 481. Allysine is present on residues lysine 492 and lysine 496. 2 positions are modified to hydroxyproline; partial: proline 522 and proline 550. Residues lysine 558, lysine 562, and lysine 566 each carry the allysine modification. Proline 580 is modified (4-hydroxyproline; partial). 4-hydroxyproline occurs at positions 589 and 598. Proline 607 carries the 4-hydroxyproline; partial modification. The tract at residues glutamate 615–valine 645 is disordered. Residues proline 630–valine 645 are compositionally biased toward low complexity. Residue proline 646 is modified to Hydroxyproline; partial. Lysine 653 and lysine 656 each carry allysine. At proline 677 the chain carries 4-hydroxyproline; partial. Allysine occurs at positions 693, 697, 735, and 738. 2 positions are modified to hydroxyproline; partial: proline 769 and proline 772. Cysteine 776 and cysteine 781 are oxidised to a cystine.

This sequence belongs to the elastin family. As to quaternary structure, the polymeric elastin chains are cross-linked together into an extensible 3D network. Forms a ternary complex with BGN and MFAP2. Interacts with MFAP2 via divalent cations (calcium &gt; magnesium &gt; manganese) in a dose-dependent and saturating manner. Interacts with FBLN5. Interacts with FBN1. Forms a ternary complex with FBN1 and FBLN2 or FBLN5. Interacts with MFAP4 in a Ca (2+)-dependent manner; this interaction promotes ELN self-assembly. Interacts with EFEMP2 with moderate affinity. Elastin is formed through the cross-linking of its soluble precursor tropoelastin. Cross-linking is initiated through the action of lysyl oxidase on exposed lysines to form allysine. Subsequent spontaneous condensation reactions with other allysine or unmodified lysine residues result in various bi-, tri-, and tetrafunctional cross-links. The most abundant cross-links in mature elastin fibers are lysinonorleucine, allysine aldol, desmosine, and isodesmosine. Post-translationally, hydroxylation on proline residues within the sequence motif, GXPG, is most likely 4-hydroxy as this fits the requirement for 4-hydroxylation in vertebrates. Expressed within the outer myometrial smooth muscle and throughout the arteriolar tree of uterus (at protein level). Also expressed in the large arteries, lung and skin.

The protein resides in the secreted. It is found in the extracellular space. Its subcellular location is the extracellular matrix. Its function is as follows. Major structural protein of tissues such as aorta and nuchal ligament, which must expand rapidly and recover completely. Molecular determinant of the late arterial morphogenesis, stabilizing arterial structure by regulating proliferation and organization of vascular smooth muscle. This Homo sapiens (Human) protein is Elastin (ELN).